We begin with the raw amino-acid sequence, 69 residues long: Pleurain-A3 (69 aa).

The signal sequence occupies residues methionine 1 to cysteine 22. The propeptide occupies lysine 23–arginine 43. Cysteine 63 and cysteine 69 are joined by a disulfide.

This sequence belongs to the frog skin active peptide (FSAP) family. Pleurain subfamily. Expressed by the skin glands.

It localises to the secreted. Antimicrobial peptide. Has activity against Gram-positive and -negative bacteria, and fungi. Has little hemolytic activity on red blood cells. The chain is Pleurain-A3 from Nidirana pleuraden (Yunnan pond frog).